Reading from the N-terminus, the 173-residue chain is C-phycocyanin beta subunit (173 aa).

Position 73 is an N4-methylasparagine (N73). (2R,3E)-phycocyanobilin-binding residues include C83 and C154.

It belongs to the phycobiliprotein family. In terms of assembly, heterodimer of an alpha and a beta subunit, which further assembles into trimers and the trimers into hexamers. Contains two covalently linked bilin chromophores.

The protein localises to the cellular thylakoid membrane. In terms of biological role, light-harvesting photosynthetic bile pigment-protein from the phycobiliprotein complex (phycobilisome, PBS). Phycocyanin is the major phycobiliprotein in the PBS rod. This is C-phycocyanin beta subunit (cpcB1) from Synechococcus elongatus (strain ATCC 33912 / PCC 7942 / FACHB-805) (Anacystis nidulans R2).